We begin with the raw amino-acid sequence, 1339 residues long: Receptor tyrosine-protein kinase erbB-3 (1339 aa).

The N-terminal stretch at 1–19 is a signal peptide; sequence MRATGTLQVLCFLLSLARG. Over 20 to 643 the chain is Extracellular; sequence SEMGNSQAVC…EVLMSKPHLV (624 aa). N-linked (GlcNAc...) asparagine glycosylation is present at Asn126. 11 disulfide bridges follow: Cys186–Cys194, Cys190–Cys202, Cys210–Cys218, Cys214–Cys226, Cys227–Cys235, Cys231–Cys243, Cys246–Cys255, Cys259–Cys286, Cys290–Cys301, Cys305–Cys320, and Cys323–Cys327. An N-linked (GlcNAc...) asparagine glycan is attached at Asn250. Residues Asn353, Asn408, Asn414, Asn437, and Asn469 are each glycosylated (N-linked (GlcNAc...) asparagine). Intrachain disulfides connect Cys500–Cys509, Cys504–Cys517, Cys520–Cys529, Cys533–Cys549, Cys552–Cys565, Cys556–Cys573, Cys576–Cys585, Cys589–Cys610, Cys613–Cys621, and Cys617–Cys629. N-linked (GlcNAc...) asparagine glycosylation occurs at Asn522. A glycan (N-linked (GlcNAc...) asparagine) is linked at Asn566. Asn616 is a glycosylation site (N-linked (GlcNAc...) asparagine). Residues 644-662 form a helical membrane-spanning segment; the sequence is IAVTVGLAVILMILGGSFL. Residues 663–1339 are Cytoplasmic-facing; that stretch reads YWRGRRIQNK…LFPKANAQRT (677 aa). Ser684 is subject to Phosphoserine. The region spanning 707–964 is the Protein kinase domain; that stretch reads LRKLKVLGSG…TFKELANEFT (258 aa). Residues 713–721, Lys740, 786–788, and 832–837 contribute to the ATP site; these read LGSGVFGTV, QYL, and DLALRN. Asp832 acts as the Proton acceptor in catalysis. Ser980 bears the Phosphoserine mark. Low complexity predominate over residues 1023-1036; that stretch reads SLGSALSLPTGTLT. 2 disordered regions span residues 1023–1052 and 1078–1215; these read SLGS…SGYM and PISL…GSLE. Positions 1039-1052 are enriched in polar residues; sequence RGSQSLLSPSSGYM. A compositionally biased stretch (low complexity) spans 1172 to 1184; that stretch reads GTLSSVGLSSVLG. Positions 1185 to 1195 are enriched in acidic residues; the sequence is TEEEDEDEEYE.

Belongs to the protein kinase superfamily. Tyr protein kinase family. EGF receptor subfamily. In terms of assembly, monomer and homodimer. Heterodimer with each of the other ERBB receptors (Potential). Interacts with CSPG5, PA2G4, GRB7, MYOC and MUC1. Found in a ternary complex with NRG1 and ITGAV:ITGB3 or ITGA6:ITGB4. Post-translationally, autophosphorylated. Ligand-binding increases phosphorylation on tyrosine residues and promotes its association with the p85 subunit of phosphatidylinositol 3-kinase.

It is found in the membrane. The enzyme catalyses L-tyrosyl-[protein] + ATP = O-phospho-L-tyrosyl-[protein] + ADP + H(+). Tyrosine-protein kinase that plays an essential role as cell surface receptor for neuregulins. Binds to neuregulin-1 (NRG1) and is activated by it; ligand-binding increases phosphorylation on tyrosine residues and promotes its association with the p85 subunit of phosphatidylinositol 3-kinase. May also be activated by CSPG5. Involved in the regulation of myeloid cell differentiation. The sequence is that of Receptor tyrosine-protein kinase erbB-3 (Erbb3) from Rattus norvegicus (Rat).